The chain runs to 319 residues: Ribonuclease Z (319 aa).

His62, His64, Asp66, His67, His145, Asp215, and His273 together coordinate Zn(2+). The active-site Proton acceptor is the Asp66.

This sequence belongs to the RNase Z family. Homodimer. Zn(2+) is required as a cofactor.

The enzyme catalyses Endonucleolytic cleavage of RNA, removing extra 3' nucleotides from tRNA precursor, generating 3' termini of tRNAs. A 3'-hydroxy group is left at the tRNA terminus and a 5'-phosphoryl group is left at the trailer molecule.. Zinc phosphodiesterase, which displays some tRNA 3'-processing endonuclease activity. Probably involved in tRNA maturation, by removing a 3'-trailer from precursor tRNA. This chain is Ribonuclease Z, found in Borrelia garinii subsp. bavariensis (strain ATCC BAA-2496 / DSM 23469 / PBi) (Borreliella bavariensis).